We begin with the raw amino-acid sequence, 376 residues long: MEGNGERDTMMVEPPDSQEFAELWLRNLIVRDNSLWGKEEEIPDDLQEVPCDVLLSDMLQPQSSSSPPTSTVPVTSDYPGLLNFTLHFQESSGTKSVTCTYSPDLNKLFCQLAKTCPVLMAVSSSPPPGSVLRATAVYKRSEHVAEVVRRCPHHERSNDSSDGPAPPGHLLRVEGNSRAVYQEDGNTQAHSVVVPYEPPQVGSQSTTVLYNYMCNSSCMGGMNRRPILTIITLETQDGHLLGRRTFEVRVCACPGRDRKTEESNFKKQQEPKTSGKTLTKRSMKDPPSHPEASKKSKNSSSDDEIYTLQVRGKERYEFLKKINDGLELSDVVPPADQEKYRQKLLSKTCRKERDGAAGEPKRGKKRLVKEEKCDSD.

A transcription activation (acidic) region spans residues 1-36 (MEGNGERDTMMVEPPDSQEFAELWLRNLIVRDNSLW). Residues 77 to 268 (DYPGLLNFTL…KTEESNFKKQ (192 aa)) mediate DNA binding. The segment covering 150 to 159 (RCPHHERSND) has biased composition (basic and acidic residues). Residues 150–171 (RCPHHERSNDSSDGPAPPGHLL) form a disordered region. 4 residues coordinate Zn(2+): cysteine 151, histidine 154, cysteine 214, and cysteine 218. The segment at 249-256 (RVCACPGR) is interaction with DNA. Composition is skewed to basic and acidic residues over residues 257–270 (DRKTEESNFKKQQE) and 282–294 (SMKDPPSHPEASK). The tract at residues 257 to 306 (DRKTEESNFKKQQEPKTSGKTLTKRSMKDPPSHPEASKKSKNSSSDDEIY) is disordered. The Bipartite nuclear localization signal motif lies at 280–297 (KRSMKDPPSHPEASKKSK). Positions 303-334 (DEIYTLQVRGKERYEFLKKINDGLELSDVVPP) are oligomerization. Residues 317-328 (EFLKKINDGLEL) carry the Nuclear export signal motif. The interval 342 to 376 (QKLLSKTCRKERDGAAGEPKRGKKRLVKEEKCDSD) is disordered. Positions 347 to 372 (KTCRKERDGAAGEPKRGKKRLVKEEK) are basic (repression of DNA-binding). A compositionally biased stretch (basic and acidic residues) spans 349-361 (CRKERDGAAGEPK).

This sequence belongs to the p53 family. In terms of assembly, binds DNA as a homotetramer. Zn(2+) serves as cofactor.

Its subcellular location is the cytoplasm. The protein resides in the nucleus. In terms of biological role, multifunctional transcription factor that induces cell cycle arrest, DNA repair or apoptosis upon binding to its target DNA sequence. Acts as a tumor suppressor in many tumor types; induces growth arrest or apoptosis depending on the physiological circumstances and cell type. Negatively regulates cell division by controlling expression of a set of genes required for this process. One of the activated genes is an inhibitor of cyclin-dependent kinases. Apoptosis induction seems to be mediated either by stimulation of BAX and FAS antigen expression, or by repression of Bcl-2 expression. This is Cellular tumor antigen p53 (tp53) from Ictalurus punctatus (Channel catfish).